We begin with the raw amino-acid sequence, 362 residues long: Somatostatin receptor type 5 (362 aa).

The span at 1–10 shows a compositional bias: polar residues; the sequence is MEPLSLTSTP. Residues 1-24 are disordered; it reads MEPLSLTSTPSWNASAASSSSHNW. At 1–35 the chain is on the extracellular side; it reads MEPLSLTSTPSWNASAASSSSHNWSLVDPVSPMGA. Over residues 11 to 24 the composition is skewed to low complexity; the sequence is SWNASAASSSSHNW. Asparagine 13 and asparagine 23 each carry an N-linked (GlcNAc...) asparagine glycan. The helical transmembrane segment at 36 to 63 threads the bilayer; it reads RAVLVPVLYLLVCTVGLGGNTLVIYVVL. Residues 64 to 73 are Cytoplasmic-facing; it reads RYAKMKTVTN. The helical transmembrane segment at 74–99 threads the bilayer; it reads VYILNLAVADVLFMLGLPFLATQNAV. At 100–110 the chain is on the extracellular side; that stretch reads SYWPFGSFLCR. Cysteines 109 and 184 form a disulfide. The helical transmembrane segment at 111-132 threads the bilayer; it reads LVMTLDGINQFTSIFCLMVMSV. Residues 133 to 154 lie on the Cytoplasmic side of the membrane; sequence DRYLAVVHPLRSARWRRPRVAK. Residues 155–175 form a helical membrane-spanning segment; the sequence is LASAAVWVFSLLMSLPLLVFA. At 176–195 the chain is on the extracellular side; the sequence is DVQEGWGTCNLSWPEPVGLW. Asparagine 185 carries an N-linked (GlcNAc...) asparagine glycan. A helical membrane pass occupies residues 196-220; it reads GAAFITYTSVLGFFGPLLVICLCYL. The Cytoplasmic portion of the chain corresponds to 221 to 246; that stretch reads LIVVKVKAAGMRVGSSRRRRSERKVT. Residues 247 to 272 form a helical membrane-spanning segment; sequence RMVVVVVLVFVGCWLPFFIVNIVNLA. Residues 273-282 are Extracellular-facing; sequence FTLPEEPTSA. The chain crosses the membrane as a helical span at residues 283-307; the sequence is GLYFFVVVLSYANSCANPLLYGFLS. The Cytoplasmic segment spans residues 308-362; it reads DNFRQSFRKALCLRRGYGVEDADAIEPRPDKSGRPQTTLPTRSCEANGLMQTSRL. Residue cysteine 319 is the site of S-palmitoyl cysteine; by ZDHHC5 attachment. A disordered region spans residues 330 to 362; sequence DAIEPRPDKSGRPQTTLPTRSCEANGLMQTSRL.

It belongs to the G-protein coupled receptor 1 family. Heterodimer with SSTR2. Heterodimerization with SSTR2 increases cell growth inhibition activity of SSTR2. Post-translationally, palmitoylated at Cys-319 by ZDHHC5, but not ZDHHC8. Palmitoylation creates an additional intracellular loop which is thought to be important for efficient coupling to G-proteins and may target the protein to lipid rafts. As to expression, expressed in adult brain but not in liver, heart, spleen, or kidney.

It localises to the cell membrane. In terms of biological role, receptor for somatostatin-28. The activity of this receptor is mediated by G proteins which inhibit adenylyl cyclase. Increases cell growth inhibition activity of SSTR2 following heterodimerization. In Mus musculus (Mouse), this protein is Somatostatin receptor type 5 (Sstr5).